Consider the following 159-residue polypeptide: Xanthine dehydrogenase iron-sulfur-binding subunit (159 aa).

The 76-residue stretch at 7 to 82 (ITIECTINGM…GKEIRTLEGE (76 aa)) folds into the 2Fe-2S ferredoxin-type domain. The [2Fe-2S] cluster site is built by cysteine 44, cysteine 49, and cysteine 52.

As to quaternary structure, heterotrimer of XdhA, XdhB and XdhC. Requires [2Fe-2S] cluster as cofactor.

It functions in the pathway purine metabolism; hypoxanthine degradation; urate from hypoxanthine: step 1/2. Iron-sulfur subunit of the xanthine dehydrogenase complex. In Escherichia coli O157:H7, this protein is Xanthine dehydrogenase iron-sulfur-binding subunit (xdhC).